The following is a 510-amino-acid chain: MEEFKGYLQKGGFKQQHFLYPLLFQEYIYVLAHDHGLNVNASTLNEPSEISGYDNKSSLLLVKRLITRIYQQNSLIHSVNDSNQNRFVGHNNNFYYKMISEGFAIVVEIPFSLRLISSLKEKKEIPKSQNLRSIHSIFSFLEDKFAHLNYVSDILIPYPVHLEILVQILQCWIQDVPSLHLLRFLFHEYHNGNNCITPKKSSYGFSKDNPRLYRFLYNSYVVECESIFVFLRKSSSYLQSTSFGTLLERTYFYGKIKHIGVTHSNDFQKTLWLFKDPFMHYVRYQGKSIMASKGTHLLMKKWKSYFVNLWQCHFHFWSQPSRIHINQFSHFSFYFLGYLSSVPINRSSVKSQMLENSFLIDTVTKKFETMVSIIPMIGSLSKAKFCNLSGNPISKPVWADLSDSDIIDRFGRICRNLSHYYSGSSKKQSLYRIKYILRLSCARTLARKHKSTVRAFLQRLGSEFLEEFFMEEEKVLSLMLPRTSYSLHKLYREPIWYLDIIRINDLVNHL.

This sequence belongs to the intron maturase 2 family. MatK subfamily.

The protein localises to the plastid. Its subcellular location is the chloroplast. Usually encoded in the trnK tRNA gene intron. Probably assists in splicing its own and other chloroplast group II introns. This Spirodela intermedia (Intermediate duckweed) protein is Maturase K.